We begin with the raw amino-acid sequence, 1122 residues long: Histidine kinase CKI1 (1122 aa).

Residues 1-12 (MMVKVTKLVASR) are Cytoplasmic-facing. The chain crosses the membrane as a helical span at residues 13-33 (PIVVFCVLAFLVVVFECIWIS). The Extracellular segment spans residues 34–345 (NWRTTTENLV…KHQAEKAKYQ (312 aa)). A helical transmembrane segment spans residues 346 to 366 (LIVVMIFLGFGWPVWFVWFMM). Residues 367-1122 (QATRREMHMR…VIREIESKRH (756 aa)) are Cytoplasmic-facing. Positions 402 to 671 (NASHDIRGAL…CFQFNVLLTT (270 aa)) constitute a Histidine kinase domain. A Phosphohistidine; by autocatalysis modification is found at His-405. Residues 918–928 (AERSPKHKVQE) show a composition bias toward basic and acidic residues. Positions 918–981 (AERSPKHKVQ…QETSKPSDDE (64 aa)) are disordered. Positions 987 to 1120 (RVLVVDDNFI…ANVIREIESK (134 aa)) constitute a Response regulatory domain. Residue Asp-1050 is modified to 4-aspartylphosphate.

Homodimer. Interacts with AHP2 and AHP3. Expressed in vascular tissues of inflorescence stems and floral organs, especially in procambium cells, and in siliques.

Its subcellular location is the cell membrane. It carries out the reaction ATP + protein L-histidine = ADP + protein N-phospho-L-histidine.. Essential protein. Functions as a histidine kinase and transmits the stress signal to a downstream MAPK cascade. This protein undergoes an ATP-dependent autophosphorylation at a conserved histidine residue in the kinase core, and a phosphoryl group is then transferred to a conserved aspartate residue in the receiver domain. Required for the development of megagametophyte in female gametophyte (embryo sac) independently of cytokinin. Contributes to vascular bundle formation and secondary growth in a cytokinin-independent manner, probably by promoting the maintenance of mitotic activity and/or identity of procambial cells. Seems to influence and promote the cytokinin signaling pathway. The protein is Histidine kinase CKI1 (CKI1) of Arabidopsis thaliana (Mouse-ear cress).